Here is a 275-residue protein sequence, read N- to C-terminus: Bis(5'-nucleosyl)-tetraphosphatase, symmetrical (275 aa).

It belongs to the Ap4A hydrolase family.

It carries out the reaction P(1),P(4)-bis(5'-adenosyl) tetraphosphate + H2O = 2 ADP + 2 H(+). Its function is as follows. Hydrolyzes diadenosine 5',5'''-P1,P4-tetraphosphate to yield ADP. The protein is Bis(5'-nucleosyl)-tetraphosphatase, symmetrical of Hamiltonella defensa subsp. Acyrthosiphon pisum (strain 5AT).